Consider the following 197-residue polypeptide: Holliday junction branch migration complex subunit RuvA (197 aa).

The segment at 1–63 is domain I; the sequence is MYAYLKGIIT…EDAHLLYGFR (63 aa). Residues 64–142 form a domain II region; sequence SEDEKKLFLS…VAGDDLPAKV (79 aa). Positions 143–147 are flexible linker; the sequence is AVQAS. Residues 148 to 197 are domain III; the sequence is AENQELEEAMEAMLALGYKATELKKIKKFFEGTTDTAENYIKSALKMLVK.

This sequence belongs to the RuvA family. Homotetramer. Forms an RuvA(8)-RuvB(12)-Holliday junction (HJ) complex. HJ DNA is sandwiched between 2 RuvA tetramers; dsDNA enters through RuvA and exits via RuvB. An RuvB hexamer assembles on each DNA strand where it exits the tetramer. Each RuvB hexamer is contacted by two RuvA subunits (via domain III) on 2 adjacent RuvB subunits; this complex drives branch migration. In the full resolvosome a probable DNA-RuvA(4)-RuvB(12)-RuvC(2) complex forms which resolves the HJ.

Its subcellular location is the cytoplasm. In terms of biological role, the RuvA-RuvB-RuvC complex processes Holliday junction (HJ) DNA during genetic recombination and DNA repair, while the RuvA-RuvB complex plays an important role in the rescue of blocked DNA replication forks via replication fork reversal (RFR). RuvA specifically binds to HJ cruciform DNA, conferring on it an open structure. The RuvB hexamer acts as an ATP-dependent pump, pulling dsDNA into and through the RuvAB complex. HJ branch migration allows RuvC to scan DNA until it finds its consensus sequence, where it cleaves and resolves the cruciform DNA. The polypeptide is Holliday junction branch migration complex subunit RuvA (Streptococcus pneumoniae (strain Hungary19A-6)).